Consider the following 340-residue polypeptide: Phosphoribosylformylglycinamidine cyclo-ligase (340 aa).

This sequence belongs to the AIR synthase family.

The protein resides in the cytoplasm. The enzyme catalyses 2-formamido-N(1)-(5-O-phospho-beta-D-ribosyl)acetamidine + ATP = 5-amino-1-(5-phospho-beta-D-ribosyl)imidazole + ADP + phosphate + H(+). Its pathway is purine metabolism; IMP biosynthesis via de novo pathway; 5-amino-1-(5-phospho-D-ribosyl)imidazole from N(2)-formyl-N(1)-(5-phospho-D-ribosyl)glycinamide: step 2/2. This Macrococcus caseolyticus (strain JCSC5402) (Macrococcoides caseolyticum) protein is Phosphoribosylformylglycinamidine cyclo-ligase.